A 783-amino-acid chain; its full sequence is Heat shock transcription factor (783 aa).

Residues methionine 1–serine 59 form a disordered region. Composition is skewed to low complexity over residues proline 11–proline 23 and leucine 31–leucine 42. Residues asparagine 43–serine 59 are compositionally biased toward polar residues. A DNA-binding region spans residues methionine 78–proline 168. The interval valine 181 to serine 262 is disordered. Composition is skewed to low complexity over residues serine 189 to valine 199 and serine 209 to glycine 233. Over residues asparagine 238–serine 262 the composition is skewed to polar residues. The involved in trimerization stretch occupies residues glycine 280 to leucine 333. Basic and acidic residues-rich tracts occupy residues arginine 350 to alanine 372 and threonine 399 to valine 415. Disordered stretches follow at residues arginine 350–proline 554, glutamine 599–leucine 652, and glutamine 736–serine 783. Residues glycine 418–phenylalanine 448 are compositionally biased toward polar residues. Low complexity-rich tracts occupy residues proline 452–serine 467, leucine 497–serine 511, proline 522–proline 550, and asparagine 616–methionine 632. The segment covering glycine 742–glycine 752 has biased composition (acidic residues). A compositionally biased stretch (gly residues) spans aspartate 753–alanine 765.

This sequence belongs to the HSF family. Homotrimer. Homotrimerization increases the affinity of HSF1 to DNA. Interacts with transcriptional coregulator SSA1 on chromatin.

Its subcellular location is the nucleus. Functionally, DNA-binding transcription factor that specifically binds heat shock promoter elements (HSE) and activates transcription. Together with its coregulator SSA1, activates expression of laccase LAC1 during glucose starvation. The protein is Heat shock transcription factor of Cryptococcus neoformans var. neoformans serotype D (strain JEC21 / ATCC MYA-565) (Filobasidiella neoformans).